The following is a 363-amino-acid chain: tRNA-specific 2-thiouridylase MnmA (363 aa).

ATP contacts are provided by residues 6–13 (AMSGGVDS) and leucine 32. Cysteine 101 serves as the catalytic Nucleophile. Cysteine 101 and cysteine 193 are oxidised to a cystine. ATP is bound at residue glycine 125. Residues 143–145 (KDQ) form an interaction with tRNA region. The active-site Cysteine persulfide intermediate is the cysteine 193.

Belongs to the MnmA/TRMU family.

The protein localises to the cytoplasm. It carries out the reaction S-sulfanyl-L-cysteinyl-[protein] + uridine(34) in tRNA + AH2 + ATP = 2-thiouridine(34) in tRNA + L-cysteinyl-[protein] + A + AMP + diphosphate + H(+). Catalyzes the 2-thiolation of uridine at the wobble position (U34) of tRNA, leading to the formation of s(2)U34. The protein is tRNA-specific 2-thiouridylase MnmA of Mycobacterium marinum (strain ATCC BAA-535 / M).